Reading from the N-terminus, the 160-residue chain is Cyclic pyranopterin monophosphate synthase (160 aa).

Substrate-binding positions include 75–77 and 113–114; these read LCH and ME. D128 is an active-site residue.

This sequence belongs to the MoaC family. As to quaternary structure, homohexamer; trimer of dimers.

It catalyses the reaction (8S)-3',8-cyclo-7,8-dihydroguanosine 5'-triphosphate = cyclic pyranopterin phosphate + diphosphate. It functions in the pathway cofactor biosynthesis; molybdopterin biosynthesis. Catalyzes the conversion of (8S)-3',8-cyclo-7,8-dihydroguanosine 5'-triphosphate to cyclic pyranopterin monophosphate (cPMP). The protein is Cyclic pyranopterin monophosphate synthase of Sodalis glossinidius (strain morsitans).